Here is a 490-residue protein sequence, read N- to C-terminus: COP9 signalosome complex subunit 2 (490 aa).

Acidic residues predominate over residues 1–30 (MSDDDFMQDSDQEYDFEYEDDEEEDTGDVD). The tract at residues 1-32 (MSDDDFMQDSDQEYDFEYEDDEEEDTGDVDIE) is disordered. The PCI domain occupies 250–418 (SEENWKEAQS…GVLELESRED (169 aa)). The segment at 469–490 (DTMRSMGSGKRGRRVGLTQRAY) is disordered.

The protein belongs to the CSN2 family. In terms of assembly, component of the COP9 signalosome (CSN) complex.

It localises to the cytoplasm. Its subcellular location is the nucleus. Functionally, component of the COP9 signalosome (CSN) complex that acts as an regulator of the ubiquitin (Ubl) conjugation pathway by mediating the deneddylation of the cullin subunit of SCF-type E3 ubiquitin-protein ligase complexes. The CSN complex is involved in the regulation of the circadian clock through its control of the stability of the SCF(FWD-1) complex. The sequence is that of COP9 signalosome complex subunit 2 (csn-2) from Neurospora crassa (strain ATCC 24698 / 74-OR23-1A / CBS 708.71 / DSM 1257 / FGSC 987).